The following is a 1165-amino-acid chain: Error-prone DNA polymerase (1165 aa).

A disordered region spans residues 1111–1165 (SEGLARPPLPTGADLYEPLTYEPLNGDRRDNPDAPAQRLRHPRDVRILPPSRDFH). Positions 1152–1165 (PRDVRILPPSRDFH) are enriched in basic and acidic residues.

The protein belongs to the DNA polymerase type-C family. DnaE2 subfamily.

It is found in the cytoplasm. It catalyses the reaction DNA(n) + a 2'-deoxyribonucleoside 5'-triphosphate = DNA(n+1) + diphosphate. DNA polymerase involved in damage-induced mutagenesis and translesion synthesis (TLS). It is not the major replicative DNA polymerase. The protein is Error-prone DNA polymerase of Rhodopseudomonas palustris (strain HaA2).